Reading from the N-terminus, the 110-residue chain is CHH-like protein (110 aa).

The signal sequence occupies residues 1-23 (MHLSSVQFAWAALVALAVSAAGA). Positions 24-35 (LPSSAPHHVERR) are excised as a propeptide. 3 disulfides stabilise this stretch: cysteine 42–cysteine 78, cysteine 58–cysteine 74, and cysteine 61–cysteine 87. A Valine amide modification is found at valine 107.

This sequence belongs to the arthropod CHH/MIH/GIH/VIH hormone family.

It is found in the secreted. This chain is CHH-like protein (CHHL), found in Bombyx mori (Silk moth).